Reading from the N-terminus, the 353-residue chain is uncharacterized protein (353 aa).

Residues Met-1–Ala-20 form the signal peptide. Cys-21 carries N-palmitoyl cysteine lipidation. A lipid anchor (S-diacylglycerol cysteine) is attached at Cys-21.

The protein localises to the cell membrane. This is an uncharacterized protein from Bacillus subtilis (strain 168).